Here is a 729-residue protein sequence, read N- to C-terminus: Fatty acid oxidation complex subunit alpha (729 aa).

Residues 1–189 (MLYKGDTLYL…KIGLVDGVVK (189 aa)) form an enoyl-CoA hydratase/isomerase region. D296 provides a ligand contact to substrate. The segment at 311–729 (ETPKHAAVLG…ARPVGELKTA (419 aa)) is 3-hydroxyacyl-CoA dehydrogenase. NAD(+) contacts are provided by residues M324, D343, 400–402 (VVE), K407, and S429. H450 serves as the catalytic For 3-hydroxyacyl-CoA dehydrogenase activity. Residue N453 coordinates NAD(+). The substrate site is built by N500 and Y660.

The protein in the N-terminal section; belongs to the enoyl-CoA hydratase/isomerase family. In the C-terminal section; belongs to the 3-hydroxyacyl-CoA dehydrogenase family. As to quaternary structure, heterotetramer of two alpha chains (FadB) and two beta chains (FadA).

It catalyses the reaction a (3S)-3-hydroxyacyl-CoA + NAD(+) = a 3-oxoacyl-CoA + NADH + H(+). The enzyme catalyses a (3S)-3-hydroxyacyl-CoA = a (2E)-enoyl-CoA + H2O. The catalysed reaction is a 4-saturated-(3S)-3-hydroxyacyl-CoA = a (3E)-enoyl-CoA + H2O. It carries out the reaction (3S)-3-hydroxybutanoyl-CoA = (3R)-3-hydroxybutanoyl-CoA. It catalyses the reaction a (3Z)-enoyl-CoA = a 4-saturated (2E)-enoyl-CoA. The enzyme catalyses a (3E)-enoyl-CoA = a 4-saturated (2E)-enoyl-CoA. It participates in lipid metabolism; fatty acid beta-oxidation. Involved in the aerobic and anaerobic degradation of long-chain fatty acids via beta-oxidation cycle. Catalyzes the formation of 3-oxoacyl-CoA from enoyl-CoA via L-3-hydroxyacyl-CoA. It can also use D-3-hydroxyacyl-CoA and cis-3-enoyl-CoA as substrate. In Enterobacter cloacae, this protein is Fatty acid oxidation complex subunit alpha.